We begin with the raw amino-acid sequence, 385 residues long: Cytochrome b (385 aa).

A run of 4 helical transmembrane segments spans residues 32 to 52 (LGSLLGLCLVIQILTGIFMAM), 76 to 98 (WLLRYMHANGASFFFICMYMHIA), 113 to 133 (VWIVGVIIFVLTMAAAFLGYC), and 179 to 199 (FFALHYLVPFIIAALVVMHFM). Heme b-binding residues include histidine 82 and histidine 96. Heme b contacts are provided by histidine 183 and histidine 197. Histidine 202 contacts a ubiquinone. Helical transmembrane passes span 225–245 (FIFKDLITVFVFLIFFSLFVF), 289–309 (LLGVITMFAAILVLLVLPITD), 321–341 (LSKFFFFLFIFNFLLLGQIGQ), and 348–368 (FVLMGQIATFLYFAYFIIIVP).

Belongs to the cytochrome b family. Fungal cytochrome b-c1 complex contains 10 subunits; 3 respiratory subunits, 2 core proteins and 5 low-molecular weight proteins. Cytochrome b-c1 complex is a homodimer. The cofactor is heme b.

It localises to the mitochondrion inner membrane. Functionally, component of the ubiquinol-cytochrome c reductase complex (complex III or cytochrome b-c1 complex) that is part of the mitochondrial respiratory chain. The b-c1 complex mediates electron transfer from ubiquinol to cytochrome c. Contributes to the generation of a proton gradient across the mitochondrial membrane that is then used for ATP synthesis. This Candida glabrata (strain ATCC 2001 / BCRC 20586 / JCM 3761 / NBRC 0622 / NRRL Y-65 / CBS 138) (Yeast) protein is Cytochrome b (COB).